We begin with the raw amino-acid sequence, 406 residues long: 2,3-bisphosphoglycerate-independent phosphoglycerate mutase (406 aa).

The segment at 156 to 183 (NLSDKISDSDPHSEGKPPEPIRPLDPSA) is disordered. The span at 160-174 (KISDSDPHSEGKPPE) shows a compositional bias: basic and acidic residues.

This sequence belongs to the BPG-independent phosphoglycerate mutase family. A-PGAM subfamily.

It carries out the reaction (2R)-2-phosphoglycerate = (2R)-3-phosphoglycerate. It participates in carbohydrate degradation; glycolysis; pyruvate from D-glyceraldehyde 3-phosphate: step 3/5. Functionally, catalyzes the interconversion of 2-phosphoglycerate and 3-phosphoglycerate. This is 2,3-bisphosphoglycerate-independent phosphoglycerate mutase from Thermoplasma volcanium (strain ATCC 51530 / DSM 4299 / JCM 9571 / NBRC 15438 / GSS1).